Reading from the N-terminus, the 431-residue chain is UPF0597 protein LCA_0156 (431 aa).

It belongs to the UPF0597 family.

This is UPF0597 protein LCA_0156 from Latilactobacillus sakei subsp. sakei (strain 23K) (Lactobacillus sakei subsp. sakei).